The sequence spans 2206 residues: Genome polyprotein (2206 aa).

Gly2 carries N-myristoyl glycine; by host lipidation. Topologically, residues 2 to 1517 (GAQVSSQKVG…NINRAMTILQ (1516 aa)) are cytoplasmic. 2 amphipathic alpha-helix regions span residues 579-599 (GVDDLITEVAQNALALSLPKP) and 579-603 (GVDDLITEVAQNALALSLPKPQSNL). Catalysis depends on for protease 2A activity residues His898 and Asp916. Zn(2+) is bound by residues Cys933 and Cys935. The active-site For protease 2A activity is Cys987. Zn(2+)-binding residues include Cys993 and His995. Positions 1125 to 1197 (GDSWLKKFTE…HQSCPSQEHQ (73 aa)) are membrane-binding. The segment at 1125–1263 (GDSWLKKFTE…SPGTGKSVAT (139 aa)) is oligomerization. Residues 1146-1150 (SNKIS) form an RNA-binding region. Residues 1229–1385 (EHTINNYIQF…SEYSRDGKLN (157 aa)) form the SF3 helicase domain. Position 1253–1260 (1253–1260 (GSPGTGKS)) interacts with ATP. Positions 1393, 1396, 1405, and 1410 each coordinate Zn(2+). The C4-type zinc finger occupies 1393 to 1410 (CKNCHQPANFKRCCPLVC). Residues 1437–1444 (EKNRRSNI) are RNA-binding. The segment at 1448–1453 (MEALFQ) is oligomerization. Residues 1518 to 1533 (AVTTFAAVAGVVYVMY) lie within the membrane without spanning it. The Cytoplasmic segment spans residues 1534–2206 (KLFAGHQGAY…TLYRRWLDSF (673 aa)). Tyr1543 carries the post-translational modification O-(5'-phospho-RNA)-tyrosine. The region spanning 1563-1741 (GPGFDYAVAM…FAAALKRSYF (179 aa)) is the Peptidase C3 domain. Catalysis depends on for protease 3C activity residues His1602, Glu1633, and Cys1709. The RdRp catalytic domain maps to 1972–2087 (EKLFAFDYTG…SYPHEVDASL (116 aa)). Mg(2+)-binding residues include Asp1978 and Asp2073.

The protein belongs to the picornaviruses polyprotein family. In terms of assembly, interacts with capsid protein VP1 and capsid protein VP3 to form heterotrimeric protomers. Interacts with capsid protein VP0, and capsid protein VP3 to form heterotrimeric protomers. Interacts with human PVR. Five protomers subsequently associate to form pentamers which serve as building blocks for the capsid. Interacts with capsid protein VP2, capsid protein VP3 and capsid protein VP4 following cleavage of capsid protein VP0. As to quaternary structure, interacts with capsid protein VP1 and capsid protein VP3 in the mature capsid. In terms of assembly, interacts with capsid protein VP0 and capsid protein VP1 to form heterotrimeric protomers. Five protomers subsequently associate to form pentamers which serve as building blocks for the capsid. Interacts with capsid protein VP4 in the mature capsid. Interacts with protein 2C; this interaction may be important for virion morphogenesis. Interacts with capsid protein VP1 and capsid protein VP3. As to quaternary structure, homodimer. In terms of assembly, homohexamer; forms a hexameric ring structure with 6-fold symmetry characteristic of AAA+ ATPases. Interacts (via N-terminus) with host RTN3 (via reticulon domain); this interaction is important for viral replication. Interacts with capsid protein VP3; this interaction may be important for virion morphogenesis. Interacts with protein 3CD. As to quaternary structure, homodimer. Interacts with host GBF1. Interacts (via GOLD domain) with host ACBD3 (via GOLD domain); this interaction allows the formation of a viral protein 3A/ACBD3 heterotetramer with a 2:2 stoichiometry, which will stimulate the recruitment of host PI4KB in order to synthesize PI4P at the viral RNA replication sites. In terms of assembly, interacts with RNA-directed RNA polymerase. Interacts with protein 3AB and with RNA-directed RNA polymerase. As to quaternary structure, interacts with Viral protein genome-linked and with protein 3CD. The cofactor is Mg(2+). Specific enzymatic cleavages in vivo by the viral proteases yield processing intermediates and the mature proteins. In terms of processing, myristoylation is required for the formation of pentamers during virus assembly. Further assembly of 12 pentamers and a molecule of genomic RNA generates the provirion. Post-translationally, during virion maturation, immature virions are rendered infectious following cleavage of VP0 into VP4 and VP2. This maturation seems to be an autocatalytic event triggered by the presence of RNA in the capsid and it is followed by a conformational change infectious virion. Myristoylation is required during RNA encapsidation and formation of the mature virus particle. In terms of processing, VPg is uridylylated by the polymerase into VPg-pUpU. This acts as a nucleotide-peptide primer for the genomic RNA replication.

Its subcellular location is the virion. The protein localises to the host cytoplasm. The protein resides in the host cytoplasmic vesicle membrane. It is found in the host nucleus. The catalysed reaction is a ribonucleoside 5'-triphosphate + H2O = a ribonucleoside 5'-diphosphate + phosphate + H(+). It carries out the reaction Selective cleavage of Tyr-|-Gly bond in the picornavirus polyprotein.. It catalyses the reaction RNA(n) + a ribonucleoside 5'-triphosphate = RNA(n+1) + diphosphate. The enzyme catalyses Selective cleavage of Gln-|-Gly bond in the poliovirus polyprotein. In other picornavirus reactions Glu may be substituted for Gln, and Ser or Thr for Gly.. Replication or transcription is subject to high level of random mutations by the nucleotide analog ribavirin. Forms an icosahedral capsid of pseudo T=3 symmetry with capsid proteins VP2 and VP3. The capsid is 300 Angstroms in diameter, composed of 60 copies of each capsid protein and enclosing the viral positive strand RNA genome. Capsid protein VP1 mainly forms the vertices of the capsid. Capsid protein VP1 interacts with host cell receptor PVR to provide virion attachment to target host cells. This attachment induces virion internalization predominantly through clathrin- and caveolin-independent endocytosis in Hela cells and through caveolin-mediated endocytosis in brain microvascular endothelial cells. Tyrosine kinases are probably involved in the entry process. Virus binding to PVR induces increased junctional permeability and rearrangement of junctional proteins. Modulation of endothelial tight junctions, as well as cytolytic infection of endothelial cells themselves, may result in loss of endothelial integrity which may help the virus to reach the CNS. After binding to its receptor, the capsid undergoes conformational changes. Capsid protein VP1 N-terminus (that contains an amphipathic alpha-helix) and capsid protein VP4 are externalized. Together, they shape a pore in the host membrane through which viral genome is translocated to host cell cytoplasm. Functionally, forms an icosahedral capsid of pseudo T=3 symmetry with capsid proteins VP2 and VP3. The capsid is 300 Angstroms in diameter, composed of 60 copies of each capsid protein and enclosing the viral positive strand RNA genome. Its function is as follows. Lies on the inner surface of the capsid shell. After binding to the host receptor, the capsid undergoes conformational changes. Capsid protein VP4 is released, Capsid protein VP1 N-terminus is externalized, and together, they shape a pore in the host membrane through which the viral genome is translocated into the host cell cytoplasm. In terms of biological role, component of immature procapsids, which is cleaved into capsid proteins VP4 and VP2 after maturation. Allows the capsid to remain inactive before the maturation step. Cysteine protease that cleaves viral polyprotein and specific host proteins. It is responsible for the autocatalytic cleavage between the P1 and P2 regions, which is the first cleavage occurring in the polyprotein. Also cleaves the host translation initiation factor EIF4G1, in order to shut down the capped cellular mRNA translation. Inhibits the host nucleus-cytoplasm protein and RNA trafficking by cleaving host members of the nuclear pores including NUP98, NUP62 and NUP153. Counteracts stress granule formation probably by antagonizing its assembly or promoting its dissassembly. Cleaves and inhibits host IFIH1/MDA5, thereby inhibiting the type-I IFN production and the establishment of the antiviral state. Cleaves and inhibits host MAVS, thereby inhibiting the type-I IFN production and the establishment of the antiviral state. Functionally, plays an essential role in the virus replication cycle by acting as a viroporin. Creates a pore in the host endoplasmic reticulum and as a consequence releases Ca2+ in the cytoplasm of infected cell. In turn, high levels of cytoplasmic calcium may trigger membrane trafficking and transport of viral ER-associated proteins to viroplasms, sites of viral genome replication. Its function is as follows. Induces and associates with structural rearrangements of intracellular membranes. Displays RNA-binding, nucleotide binding and NTPase activities. May play a role in virion morphogenesis and viral RNA encapsidation by interacting with the capsid protein VP3. In terms of biological role, localizes the viral replication complex to the surface of membranous vesicles. Together with protein 3CD binds the Cis-Active RNA Element (CRE) which is involved in RNA synthesis initiation. Acts as a cofactor to stimulate the activity of 3D polymerase, maybe through a nucleid acid chaperone activity. Localizes the viral replication complex to the surface of membranous vesicles. It inhibits host cell endoplasmic reticulum-to-Golgi apparatus transport and causes the disassembly of the Golgi complex, possibly through GBF1 interaction. This would result in depletion of MHC, trail receptors and IFN receptors at the host cell surface. Plays an essential role in viral RNA replication by recruiting ACBD3 and PI4KB at the viral replication sites, thereby allowing the formation of the rearranged membranous structures where viral replication takes place. Functionally, acts as a primer for viral RNA replication and remains covalently bound to viral genomic RNA. VPg is uridylylated prior to priming replication into VPg-pUpU. The oriI viral genomic sequence may act as a template for this. The VPg-pUpU is then used as primer on the genomic RNA poly(A) by the RNA-dependent RNA polymerase to replicate the viral genome. During genome replication, the VPg-RNA linkage is removed by the host TDP2, thereby accelerating replication. During the late stage of the replication cycle, host TDP2 is excluded from sites of viral RNA synthesis and encapsidation, allowing for the generation of progeny virions. Its function is as follows. Involved in the viral replication complex and viral polypeptide maturation. It exhibits protease activity with a specificity and catalytic efficiency that is different from protease 3C. Protein 3CD lacks polymerase activity. Protein 3CD binds to the 5'UTR of the viral genome. In terms of biological role, major viral protease that mediates proteolytic processing of the polyprotein. Cleaves host EIF5B, contributing to host translation shutoff. Also cleaves host PABPC1, contributing to host translation shutoff. Cleaves host RIGI and thus contributes to the inhibition of type I interferon production. Cleaves host NLRP1, triggers host N-glycine-mediated degradation of the autoinhibitory NLRP1 N-terminal fragment. Inhibits the integrated stress response (ISR) in the infected cell by cleaving host G3BP1. Stress granule formation is thus inhibited, which allows protein synthesis and viral replication. Replicates the viral genomic RNA on the surface of intracellular membranes. May form linear arrays of subunits that propagate along a strong head-to-tail interaction called interface-I. Covalently attaches UMP to a tyrosine of VPg, which is used to prime RNA synthesis. The positive stranded RNA genome is first replicated at virus induced membranous vesicles, creating a dsRNA genomic replication form. This dsRNA is then used as template to synthesize positive stranded RNA genomes. ss(+)RNA genomes are either translated, replicated or encapsidated. The protein is Genome polyprotein of Poliovirus type 3 (strain 23127).